Reading from the N-terminus, the 112-residue chain is UPF0102 protein JJD26997_0163 (112 aa).

This sequence belongs to the UPF0102 family.

The sequence is that of UPF0102 protein JJD26997_0163 from Campylobacter jejuni subsp. doylei (strain ATCC BAA-1458 / RM4099 / 269.97).